The following is an 854-amino-acid chain: DNA mismatch repair protein MutS (854 aa).

Residues 1–21 (MTASDIQPTEPHTPPTPHADT) form a disordered region. 658 to 665 (GPNASGKS) serves as a coordination point for ATP.

This sequence belongs to the DNA mismatch repair MutS family.

This protein is involved in the repair of mismatches in DNA. It is possible that it carries out the mismatch recognition step. This protein has a weak ATPase activity. This chain is DNA mismatch repair protein MutS, found in Trichormus variabilis (strain ATCC 29413 / PCC 7937) (Anabaena variabilis).